Reading from the N-terminus, the 124-residue chain is Small ribosomal subunit protein uS12 (124 aa).

The residue at position 89 (D89) is a 3-methylthioaspartic acid. K108 is subject to N6-acetyllysine.

Belongs to the universal ribosomal protein uS12 family. In terms of assembly, part of the 30S ribosomal subunit. Contacts proteins S8 and S17. May interact with IF1 in the 30S initiation complex.

Its function is as follows. With S4 and S5 plays an important role in translational accuracy. In terms of biological role, interacts with and stabilizes bases of the 16S rRNA that are involved in tRNA selection in the A site and with the mRNA backbone. Located at the interface of the 30S and 50S subunits, it traverses the body of the 30S subunit contacting proteins on the other side and probably holding the rRNA structure together. The combined cluster of proteins S8, S12 and S17 appears to hold together the shoulder and platform of the 30S subunit. This chain is Small ribosomal subunit protein uS12, found in Escherichia coli (strain K12 / MC4100 / BW2952).